Here is a 215-residue protein sequence, read N- to C-terminus: Protein-L-isoaspartate O-methyltransferase (215 aa).

Residue serine 62 is part of the active site.

Belongs to the methyltransferase superfamily. L-isoaspartyl/D-aspartyl protein methyltransferase family.

It is found in the cytoplasm. The catalysed reaction is [protein]-L-isoaspartate + S-adenosyl-L-methionine = [protein]-L-isoaspartate alpha-methyl ester + S-adenosyl-L-homocysteine. In terms of biological role, catalyzes the methyl esterification of L-isoaspartyl residues in peptides and proteins that result from spontaneous decomposition of normal L-aspartyl and L-asparaginyl residues. It plays a role in the repair and/or degradation of damaged proteins. The protein is Protein-L-isoaspartate O-methyltransferase of Bradyrhizobium sp. (strain BTAi1 / ATCC BAA-1182).